Reading from the N-terminus, the 475-residue chain is Peripherin (475 aa).

Residues 1–42 (MPSSASMSHHHSSGLRSSISSTSYRRTFGPPPSLSPGAFSYS) form a disordered region. Positions 1–103 (MPSSASMSHH…FLATRSNEKQ (103 aa)) are head. The segment covering 14-26 (GLRSSISSTSYRR) has biased composition (low complexity). Tyr-24 is subject to 3'-nitrotyrosine. Ser-35 and Ser-57 each carry phosphoserine. Ser-66 is modified (phosphoserine; by PKB/AKT1). The region spanning 101–411 (EKQELQELND…KLLEGEESRI (311 aa)) is the IF rod domain. The interval 104 to 136 (ELQELNDRFANFIEKVRFLEQQNAALRGELSQA) is coil 1A. The interval 137–147 (RGQEPARADQL) is linker 1. Residues 148 to 243 (CQQELRELRR…KLHEEELRDL (96 aa)) are coil 1B. A linker 2 region spans residues 244–266 (QVSVESQQVQQVEVEATVKPELT). Positions 267 to 409 (AALRDIRAQY…YRKLLEGEES (143 aa)) are coil 2. Tyr-383 bears the 3'-nitrotyrosine mark. Residues 410–475 (RISVPVHSFA…DLDKSSIHSY (66 aa)) form a tail region. A disordered region spans residues 453–475 (EKVVTESQKEQHSDLDKSSIHSY). At Tyr-475 the chain carries Phosphotyrosine.

Belongs to the intermediate filament family. In terms of assembly, forms homodimers (in vitro). Homopolymerizes into a filamentous network (in vitro). Forms heterodimers with NEFL, NEFM or NEFH (in vitro). Interacts with DST (via C-terminus). Interacts with RAB7A; the interaction is direct. Interacts with PRKCE (via phorbol-ester/DAG-type 2 domain). Post-translationally, phosphorylated; phosphorylation increases after nerve injury in regenerating neurons. In terms of tissue distribution, expressed in the sciatic nerve and at very low levels in the central nervous system (at protein level). Expressed in the spinal cord, in the sciatic nerve at the level of the dorsal root ganglion and in trigeminal nerves (at protein level). Expressed in the cranial nerves in the hindbrain, including the sensory and motor trigeminal neurons, the mesencephalic trigeminal neurons, the spinal trigeminal neurons, and in the facial nerve (at protein level). Expressed in the cerebellum, with expression in the inferior cerebellar peduncle and the lateral deep cerebellar nucleus (at protein level). Expressed in vestibulocochlear neurons, such as the anteroventral cochlear nucleus, the dorsal cochlear nucleus, the superficial granule cell layer and the granule cell lamina (at protein level). Expressed in glossopharyngeal, vagal and hypoglossal neurons (at protein level). Expressed in peripheral sensory neurons, in the dorsal root ganglia and the spinal cord, and to a lower extent in motor neurons. Expressed in the optic tract of the central nervous system, especially in the lateral geniculate nucleus and the superior colliculus. Expressed in neurons of the pineal stalk in the cortex. Expressed in the spinal trigeminal tract of the midbrain, in the medulla and in the medial cerebellar peduncle.

The protein resides in the cytoplasm. Its subcellular location is the cytoskeleton. The protein localises to the cell projection. It localises to the axon. It is found in the perikaryon. Its function is as follows. Class-III neuronal intermediate filament protein. May form an independent structural network without the involvement of other neurofilaments or may cooperate with the neuronal intermediate filament proteins NEFL, NEFH, NEFM and INA to form filamentous networks. Assembly of the neuronal intermediate filaments may be regulated by RAB7A. Plays a role in the development of unmyelinated sensory neurons. May be involved in axon elongation and axon regeneration after injury. Inhibits neurite extension in type II spiral ganglion neurons in the cochlea. The protein is Peripherin (Prph) of Mus musculus (Mouse).